Reading from the N-terminus, the 74-residue chain is Small ribosomal subunit protein bS18 (74 aa).

Belongs to the bacterial ribosomal protein bS18 family. As to quaternary structure, part of the 30S ribosomal subunit. Forms a tight heterodimer with protein bS6.

Binds as a heterodimer with protein bS6 to the central domain of the 16S rRNA, where it helps stabilize the platform of the 30S subunit. The chain is Small ribosomal subunit protein bS18 from Thioalkalivibrio sulfidiphilus (strain HL-EbGR7).